A 200-amino-acid chain; its full sequence is Orotate phosphoribosyltransferase (200 aa).

5-phospho-alpha-D-ribose 1-diphosphate contacts are provided by residues R95, K99, H101, and 121 to 129 (DDVATTGGS). Residues T125 and R153 each contribute to the orotate site.

Belongs to the purine/pyrimidine phosphoribosyltransferase family. PyrE subfamily. As to quaternary structure, homodimer. Requires Mg(2+) as cofactor.

It catalyses the reaction orotidine 5'-phosphate + diphosphate = orotate + 5-phospho-alpha-D-ribose 1-diphosphate. The protein operates within pyrimidine metabolism; UMP biosynthesis via de novo pathway; UMP from orotate: step 1/2. Catalyzes the transfer of a ribosyl phosphate group from 5-phosphoribose 1-diphosphate to orotate, leading to the formation of orotidine monophosphate (OMP). This chain is Orotate phosphoribosyltransferase, found in Cenarchaeum symbiosum (strain A).